Here is a 320-residue protein sequence, read N- to C-terminus: Ferrochelatase (320 aa).

Positions 194 and 275 each coordinate Fe cation.

It belongs to the ferrochelatase family. In terms of assembly, monomer.

It is found in the cytoplasm. The enzyme catalyses heme b + 2 H(+) = protoporphyrin IX + Fe(2+). It functions in the pathway porphyrin-containing compound metabolism; protoheme biosynthesis; protoheme from protoporphyrin-IX: step 1/1. Functionally, catalyzes the ferrous insertion into protoporphyrin IX. In Salmonella agona (strain SL483), this protein is Ferrochelatase.